The sequence spans 90 residues: Large ribosomal subunit protein bL27 (90 aa).

Residues 1-22 (MAHKKAGGSTRNGRDSNPKMLG) form a disordered region.

The protein belongs to the bacterial ribosomal protein bL27 family.

The polypeptide is Large ribosomal subunit protein bL27 (Coxiella burnetii (strain Dugway 5J108-111)).